The sequence spans 585 residues: Eukaryotic translation initiation factor 3 subunit D (585 aa).

A compositionally biased stretch (gly residues) spans 110–130; sequence GGGTVFRGRGQRGVGQRGGRA. The disordered stretch occupies residues 110 to 152; it reads GGGTVFRGRGQRGVGQRGGRAGFQRVGAGRGQGGDRYYDNRSA. The RNA gate stretch occupies residues 300–314; sequence SIDLVTVNENAADAP. The segment at 560 to 585 is disordered; that stretch reads VPPNTFEEDDEAAEEQEEKAEDESEE. Residues 565 to 585 are compositionally biased toward acidic residues; it reads FEEDDEAAEEQEEKAEDESEE.

The protein belongs to the eIF-3 subunit D family. Component of the eukaryotic translation initiation factor 3 (eIF-3) complex.

It is found in the cytoplasm. MRNA cap-binding component of the eukaryotic translation initiation factor 3 (eIF-3) complex, which is involved in protein synthesis of a specialized repertoire of mRNAs and, together with other initiation factors, stimulates binding of mRNA and methionyl-tRNAi to the 40S ribosome. The eIF-3 complex specifically targets and initiates translation of a subset of mRNAs involved in cell proliferation. In the eIF-3 complex, eif3d specifically recognizes and binds the 7-methylguanosine cap of a subset of mRNAs. This Aspergillus fumigatus (strain CBS 144.89 / FGSC A1163 / CEA10) (Neosartorya fumigata) protein is Eukaryotic translation initiation factor 3 subunit D.